Consider the following 96-residue polypeptide: Integration host factor subunit beta (96 aa).

Residues 59-86 (RVGRNPKTGETVELDGKHVPHFKPGKEL) form a disordered region. The span at 72–86 (LDGKHVPHFKPGKEL) shows a compositional bias: basic and acidic residues.

This sequence belongs to the bacterial histone-like protein family. Heterodimer of an alpha and a beta chain.

This protein is one of the two subunits of integration host factor, a specific DNA-binding protein that functions in genetic recombination as well as in transcriptional and translational control. The sequence is that of Integration host factor subunit beta from Pseudoalteromonas atlantica (strain T6c / ATCC BAA-1087).